The primary structure comprises 120 residues: Ribosome-binding factor A (120 aa).

Belongs to the RbfA family. Monomer. Binds 30S ribosomal subunits, but not 50S ribosomal subunits or 70S ribosomes.

The protein resides in the cytoplasm. Functionally, one of several proteins that assist in the late maturation steps of the functional core of the 30S ribosomal subunit. Associates with free 30S ribosomal subunits (but not with 30S subunits that are part of 70S ribosomes or polysomes). Required for efficient processing of 16S rRNA. May interact with the 5'-terminal helix region of 16S rRNA. The chain is Ribosome-binding factor A from Chlorobaculum tepidum (strain ATCC 49652 / DSM 12025 / NBRC 103806 / TLS) (Chlorobium tepidum).